We begin with the raw amino-acid sequence, 321 residues long: Small ribosomal subunit protein mS43 (321 aa).

The transit peptide at 1 to 13 directs the protein to the mitochondrion; that stretch reads MLRFTGARAIRKY.

It belongs to the mitochondrion-specific ribosomal protein mS43 family. In terms of assembly, component of the mitochondrial small ribosomal subunit (mt-SSU). Mature yeast 74S mitochondrial ribosomes consist of a small (37S) and a large (54S) subunit. The 37S small subunit contains a 15S ribosomal RNA (15S mt-rRNA) and 34 different proteins. The 54S large subunit contains a 21S rRNA (21S mt-rRNA) and 46 different proteins. mS43 forms a heterodimer with mS42, building a large protuberance adjacent to the mRNA channel exit in the mt-SSU body.

It is found in the mitochondrion. Component of the mitochondrial ribosome (mitoribosome), a dedicated translation machinery responsible for the synthesis of mitochondrial genome-encoded proteins, including at least some of the essential transmembrane subunits of the mitochondrial respiratory chain. The mitoribosomes are attached to the mitochondrial inner membrane and translation products are cotranslationally integrated into the membrane. The protein is Small ribosomal subunit protein mS43 (MRP1) of Saccharomyces cerevisiae (strain ATCC 204508 / S288c) (Baker's yeast).